Here is a 230-residue protein sequence, read N- to C-terminus: Large ribosomal subunit protein uL1c (230 aa).

This sequence belongs to the universal ribosomal protein uL1 family. In terms of assembly, part of the 50S ribosomal subunit.

The protein resides in the plastid. The protein localises to the chloroplast. Functionally, binds directly to 23S rRNA. Might be involved in E site tRNA release (Potential). The protein is Large ribosomal subunit protein uL1c (rpl1) of Trieres chinensis (Marine centric diatom).